The sequence spans 184 residues: ATP synthase subunit b, chloroplastic (184 aa).

A helical membrane pass occupies residues 27–49 (LATNPINLSVVLGVLIFFGKGVL).

It belongs to the ATPase B chain family. F-type ATPases have 2 components, F(1) - the catalytic core - and F(0) - the membrane proton channel. F(1) has five subunits: alpha(3), beta(3), gamma(1), delta(1), epsilon(1). F(0) has four main subunits: a(1), b(1), b'(1) and c(10-14). The alpha and beta chains form an alternating ring which encloses part of the gamma chain. F(1) is attached to F(0) by a central stalk formed by the gamma and epsilon chains, while a peripheral stalk is formed by the delta, b and b' chains.

Its subcellular location is the plastid. The protein resides in the chloroplast thylakoid membrane. Its function is as follows. F(1)F(0) ATP synthase produces ATP from ADP in the presence of a proton or sodium gradient. F-type ATPases consist of two structural domains, F(1) containing the extramembraneous catalytic core and F(0) containing the membrane proton channel, linked together by a central stalk and a peripheral stalk. During catalysis, ATP synthesis in the catalytic domain of F(1) is coupled via a rotary mechanism of the central stalk subunits to proton translocation. Functionally, component of the F(0) channel, it forms part of the peripheral stalk, linking F(1) to F(0). The protein is ATP synthase subunit b, chloroplastic of Oenothera argillicola (Appalachian evening primrose).